The primary structure comprises 164 residues: FMN reductase (NADH) RutF (164 aa).

Belongs to the non-flavoprotein flavin reductase family. RutF subfamily.

The enzyme catalyses FMNH2 + NAD(+) = FMN + NADH + 2 H(+). Its function is as follows. Catalyzes the reduction of FMN to FMNH2 which is used to reduce pyrimidine by RutA via the Rut pathway. In Shigella flexneri serotype X (strain 2002017), this protein is FMN reductase (NADH) RutF.